We begin with the raw amino-acid sequence, 715 residues long: Probable GTP diphosphokinase RSH3, chloroplastic (715 aa).

Residues 1–64 (MVVATTIALY…LLFSGASVKS (64 aa)) constitute a chloroplast transit peptide. Residues 65 to 74 (SSSSSSSHPS) are compositionally biased toward low complexity. Residues 65 to 84 (SSSSSSSHPSVGEELASIRH) form a disordered region. The HD domain occupies 237–341 (YLQHCVETAM…IKLADRLHNM (105 aa)).

This sequence belongs to the RelA/SpoT family. Expressed in roots, hypocotyls, shoots, cotyledons, rosette and cauline leaves, stems, petals, sepals, stamens, pistils and siliques.

It localises to the plastid. The protein resides in the chloroplast. It catalyses the reaction GTP + ATP = guanosine 3'-diphosphate 5'-triphosphate + AMP. In terms of biological role, possesses ppGpp (guanosine 3'-diphosphate 5'-diphosphate) synthetase activity in vitro and is able to functionally complement E.coli relA mutants. May be involved in a rapid plant ppGpp-mediated response to pathogens and other stresses. The protein is Probable GTP diphosphokinase RSH3, chloroplastic (RSH3) of Arabidopsis thaliana (Mouse-ear cress).